The following is a 532-amino-acid chain: 2-isopropylmalate synthase (532 aa).

One can recognise a Pyruvate carboxyltransferase domain in the interval 5–267 (VIIFDTTLRD…HTNINHQEIY (263 aa)). 4 residues coordinate Mn(2+): D14, H202, H204, and N238. Residues 392 to 532 (HLDYFSVQSG…SKQQNSQETV (141 aa)) form a regulatory domain region. Residues 513-532 (QQHNNQQQNDSKQQNSQETV) form a disordered region.

This sequence belongs to the alpha-IPM synthase/homocitrate synthase family. LeuA type 1 subfamily. Homodimer. Requires Mn(2+) as cofactor.

Its subcellular location is the cytoplasm. The catalysed reaction is 3-methyl-2-oxobutanoate + acetyl-CoA + H2O = (2S)-2-isopropylmalate + CoA + H(+). It participates in amino-acid biosynthesis; L-leucine biosynthesis; L-leucine from 3-methyl-2-oxobutanoate: step 1/4. Functionally, catalyzes the condensation of the acetyl group of acetyl-CoA with 3-methyl-2-oxobutanoate (2-ketoisovalerate) to form 3-carboxy-3-hydroxy-4-methylpentanoate (2-isopropylmalate). The protein is 2-isopropylmalate synthase of Pectobacterium atrosepticum (strain SCRI 1043 / ATCC BAA-672) (Erwinia carotovora subsp. atroseptica).